The sequence spans 360 residues: MNCESLLTALDVSTLLSTLSSPEKEHRRKRRRGEVANPSNTLDALVARKADDQPFEKRYLSEQEAIEGPDDEIEMKKMELDPDVSTRTCSTCGYQGKWVSEMIRHKRVHTSERPFKCRYCSRTSKWKADLIRHVAKTHGIRVVSKYSRSKVFDATNSSMDSSCSSDSDRCIISEKRTVFYRCQLCSFEDERVSVLNSHVSHLHNTSPCVCRCGAKFEDVQGALAHSNGPCSHVDMIYNVMPTYEKASPLSPCRSESSSDSGIQTDPEEEASIITSSLPTPQLGSSPLLLSPTLPVTPSFLPDIQSALLSLQPNPLMSLYLASLLQSSLLNSPTIPTSFPQIIPTTILTPSQQDEMVDVEM.

Positions 19–41 (LSSPEKEHRRKRRRGEVANPSNT) are disordered. C2H2-type zinc fingers lie at residues 87–109 (RTCS…KRVH), 115–138 (FKCR…AKTH), and 180–203 (YRCQ…SHLH). A compositionally biased stretch (low complexity) spans 248–260 (PLSPCRSESSSDS). A disordered region spans residues 248 to 272 (PLSPCRSESSSDSGIQTDPEEEASI).

Expressed in pharyngeal epithelium/arcade, which connects the pharynx to the mouth.

Transcription factor. Represses gene expression, probably via binding to DNA consensus sequence 5'-[AT][CT]TTCC[AC][AG]-3' in promoter regions. May play a role in pharynx morphogenesis. The polypeptide is Zinc finger protein ztf-2 (Caenorhabditis elegans).